A 201-amino-acid chain; its full sequence is Protein GrpE (201 aa).

Polar residues predominate over residues 1–11; it reads MTDSTNNQGTS. A disordered region spans residues 1 to 40; the sequence is MTDSTNNQGTSGRPDDDHTTEEVASVFNDPGAQAPAGEPD.

Belongs to the GrpE family. In terms of assembly, homodimer.

The protein resides in the cytoplasm. In terms of biological role, participates actively in the response to hyperosmotic and heat shock by preventing the aggregation of stress-denatured proteins, in association with DnaK and GrpE. It is the nucleotide exchange factor for DnaK and may function as a thermosensor. Unfolded proteins bind initially to DnaJ; upon interaction with the DnaJ-bound protein, DnaK hydrolyzes its bound ATP, resulting in the formation of a stable complex. GrpE releases ADP from DnaK; ATP binding to DnaK triggers the release of the substrate protein, thus completing the reaction cycle. Several rounds of ATP-dependent interactions between DnaJ, DnaK and GrpE are required for fully efficient folding. In Beijerinckia indica subsp. indica (strain ATCC 9039 / DSM 1715 / NCIMB 8712), this protein is Protein GrpE.